The primary structure comprises 100 residues: Urease subunit gamma (100 aa).

The protein belongs to the urease gamma subunit family. As to quaternary structure, heterotrimer of UreA (gamma), UreB (beta) and UreC (alpha) subunits. Three heterotrimers associate to form the active enzyme.

It localises to the cytoplasm. The enzyme catalyses urea + 2 H2O + H(+) = hydrogencarbonate + 2 NH4(+). It functions in the pathway nitrogen metabolism; urea degradation; CO(2) and NH(3) from urea (urease route): step 1/1. This is Urease subunit gamma from Ruegeria pomeroyi (strain ATCC 700808 / DSM 15171 / DSS-3) (Silicibacter pomeroyi).